We begin with the raw amino-acid sequence, 81 residues long: Cytochrome c oxidase subunit NDUFA4 (81 aa).

Over 1-14 (MLRQIIGQAKKHPS) the chain is Mitochondrial matrix. Lys10 carries the post-translational modification N6-acetyllysine. The chain crosses the membrane as a helical span at residues 15–37 (LIPLFVFIGTGATGATLYLLRLA). At 38-81 (LFNPDVCWDRNNPEPWNKLGPNDQYKFYSVNVDYSKLKKERPDF) the chain is on the mitochondrial intermembrane side. Residue Ser66 is modified to Phosphoserine.

It belongs to the complex IV NDUFA4 subunit family. Component of the cytochrome c oxidase (complex IV, CIV), a multisubunit enzyme composed of 14 subunits. The complex is composed of a catalytic core of 3 subunits MT-CO1, MT-CO2 and MT-CO3, encoded in the mitochondrial DNA, and 11 supernumerary subunits COX4I1 (or COX4I2), COX5A, COX5B, COX6A1 (or COX6A2), COX6B1 (or COX6B2), COX6C, COX7A2 (or COX7A1), COX7B, COX7C, COX8A and NDUFA4, which are encoded in the nuclear genome. The complex exists as a monomer or a dimer and forms supercomplexes (SCs) in the inner mitochondrial membrane with NADH-ubiquinone oxidoreductase (complex I, CI) and ubiquinol-cytochrome c oxidoreductase (cytochrome b-c1 complex, complex III, CIII), resulting in different assemblies (supercomplex SCI(1)III(2)IV(1) and megacomplex MCI(2)III(2)IV(2)). Interacts with RAB5IF. Interacts with FLVCR2; this interaction occurs in the absence of heme and is disrupted upon heme binding.

The protein localises to the mitochondrion inner membrane. Its function is as follows. Component of the cytochrome c oxidase, the last enzyme in the mitochondrial electron transport chain which drives oxidative phosphorylation. The respiratory chain contains 3 multisubunit complexes succinate dehydrogenase (complex II, CII), ubiquinol-cytochrome c oxidoreductase (cytochrome b-c1 complex, complex III, CIII) and cytochrome c oxidase (complex IV, CIV), that cooperate to transfer electrons derived from NADH and succinate to molecular oxygen, creating an electrochemical gradient over the inner membrane that drives transmembrane transport and the ATP synthase. Cytochrome c oxidase is the component of the respiratory chain that catalyzes the reduction of oxygen to water. Electrons originating from reduced cytochrome c in the intermembrane space (IMS) are transferred via the dinuclear copper A center (CU(A)) of subunit 2 and heme A of subunit 1 to the active site in subunit 1, a binuclear center (BNC) formed by heme A3 and copper B (CU(B)). The BNC reduces molecular oxygen to 2 water molecules unsing 4 electrons from cytochrome c in the IMS and 4 protons from the mitochondrial matrix. NDUFA4 is required for complex IV maintenance. The chain is Cytochrome c oxidase subunit NDUFA4 (NDUFA4) from Homo sapiens (Human).